The primary structure comprises 423 residues: UDP-N-acetylglucosamine 1-carboxyvinyltransferase 1 (423 aa).

23–24 contributes to the phosphoenolpyruvate binding site; sequence KN. Position 96 (Arg96) interacts with UDP-N-acetyl-alpha-D-glucosamine. Catalysis depends on Cys120, which acts as the Proton donor. Cys120 carries the 2-(S-cysteinyl)pyruvic acid O-phosphothioketal modification. Residues Asp309 and Val331 each contribute to the UDP-N-acetyl-alpha-D-glucosamine site.

It belongs to the EPSP synthase family. MurA subfamily.

The protein localises to the cytoplasm. It carries out the reaction phosphoenolpyruvate + UDP-N-acetyl-alpha-D-glucosamine = UDP-N-acetyl-3-O-(1-carboxyvinyl)-alpha-D-glucosamine + phosphate. Its pathway is cell wall biogenesis; peptidoglycan biosynthesis. Its function is as follows. Cell wall formation. Adds enolpyruvyl to UDP-N-acetylglucosamine. This chain is UDP-N-acetylglucosamine 1-carboxyvinyltransferase 1, found in Streptococcus pyogenes serotype M3 (strain ATCC BAA-595 / MGAS315).